We begin with the raw amino-acid sequence, 287 residues long: Pyridoxal kinase PdxY (287 aa).

Substrate is bound by residues Ser10 and 45-46 (TQ). ATP-binding positions include Asp112, Ala144, Glu149, Lys182, and 209–212 (RPLV). Asp224 is a binding site for substrate.

Belongs to the pyridoxine kinase family. PdxY subfamily. Homodimer. The cofactor is Mg(2+).

The catalysed reaction is pyridoxal + ATP = pyridoxal 5'-phosphate + ADP + H(+). The protein operates within cofactor metabolism; pyridoxal 5'-phosphate salvage; pyridoxal 5'-phosphate from pyridoxal: step 1/1. Its function is as follows. Pyridoxal kinase involved in the salvage pathway of pyridoxal 5'-phosphate (PLP). Catalyzes the phosphorylation of pyridoxal to PLP. This chain is Pyridoxal kinase PdxY, found in Escherichia coli O6:H1 (strain CFT073 / ATCC 700928 / UPEC).